We begin with the raw amino-acid sequence, 417 residues long: N-acetylmuramoyl-L-alanine amidase AmiC (417 aa).

Residues 1–31 (MSGSNTAISRRRLLQGAGAMWLLSVSQVSLA) constitute a signal peptide (tat-type signal). A disordered region spans residues 166–185 (LEKQVPPAQSGPQPGKAGRD). Residues 190 to 404 (IMLDPGHGGE…VAESILAGIK (215 aa)) enclose the MurNAc-LAA domain.

This sequence belongs to the N-acetylmuramoyl-L-alanine amidase 3 family. Predicted to be exported by the Tat system. The position of the signal peptide cleavage has not been experimentally proven.

The protein localises to the periplasm. It catalyses the reaction Hydrolyzes the link between N-acetylmuramoyl residues and L-amino acid residues in certain cell-wall glycopeptides.. Its function is as follows. Cell-wall hydrolase involved in septum cleavage during cell division. The protein is N-acetylmuramoyl-L-alanine amidase AmiC (amiC) of Escherichia coli O6:H1 (strain CFT073 / ATCC 700928 / UPEC).